A 337-amino-acid polypeptide reads, in one-letter code: DNA replication regulator sld2 (337 aa).

A phosphothreonine; by cdc2 mark is found at threonine 60 and threonine 74. The disordered stretch occupies residues 71–97 (KFQTPTKQRAETEANESPKAPRNDYLQ). A Phosphoserine; by cdc2 modification is found at serine 87. A phosphothreonine; by cdc2 mark is found at threonine 99 and threonine 154. Serine 183 carries the phosphoserine modification. The disordered stretch occupies residues 258–302 (SMNLSKSHLEGLPEIDEDAENGIDDNEDTTASKDSSPFLDLQSER). Acidic residues predominate over residues 270 to 285 (PEIDEDAENGIDDNED).

It belongs to the SLD2 family. As to quaternary structure, interacts with rad4. In terms of processing, phosphorylated by cdc2 at the onset of S-phase.

The protein resides in the cytoplasm. The protein localises to the nucleus. Functionally, has a role in the initiation of DNA replication. Required at S-phase checkpoint. The protein is DNA replication regulator sld2 (drc1) of Schizosaccharomyces pombe (strain 972 / ATCC 24843) (Fission yeast).